We begin with the raw amino-acid sequence, 170 residues long: uncharacterized protein (170 aa).

This is an uncharacterized protein from Homo sapiens (Human).